A 221-amino-acid chain; its full sequence is Chalcone--flavanone isomerase (221 aa).

Residues T47, N112, and S189 each contribute to the substrate site.

It belongs to the chalcone isomerase family.

It carries out the reaction a chalcone = a flavanone.. It functions in the pathway secondary metabolite biosynthesis; flavonoid biosynthesis. Catalyzes the intramolecular cyclization of bicyclic chalcones into tricyclic (S)-flavanones. Responsible for the isomerization of 4,2',4',6'-tetrahydroxychalcone (also termed chalcone) into naringenin. The polypeptide is Chalcone--flavanone isomerase (CHI) (Dianthus caryophyllus (Carnation)).